We begin with the raw amino-acid sequence, 87 residues long: U3-theraphotoxin-Hhn1a 5 (87 aa).

An N-terminal signal peptide occupies residues 1–24 (MVNMKASMFLTFAGLVLLFVVCYA). Residues 25–52 (SESEEKEFPKEMLSSIFAVDNDFKQEER) constitute a propeptide that is removed on maturation. 3 disulfide bridges follow: Cys-54/Cys-67, Cys-61/Cys-72, and Cys-66/Cys-79.

This sequence belongs to the neurotoxin 10 (Hwtx-1) family. 51 (Hntx-8) subfamily. Hntx-8 sub-subfamily. Expressed by the venom gland.

Its subcellular location is the secreted. In terms of biological role, ion channel inhibitor. This chain is U3-theraphotoxin-Hhn1a 5, found in Cyriopagopus hainanus (Chinese bird spider).